We begin with the raw amino-acid sequence, 245 residues long: tRNA pseudouridine synthase A 2 (245 aa).

The active-site Nucleophile is D53. A substrate-binding site is contributed by Y111.

This sequence belongs to the tRNA pseudouridine synthase TruA family. Homodimer.

The enzyme catalyses uridine(38/39/40) in tRNA = pseudouridine(38/39/40) in tRNA. In terms of biological role, formation of pseudouridine at positions 38, 39 and 40 in the anticodon stem and loop of transfer RNAs. The protein is tRNA pseudouridine synthase A 2 of Bacillus cereus (strain ATCC 14579 / DSM 31 / CCUG 7414 / JCM 2152 / NBRC 15305 / NCIMB 9373 / NCTC 2599 / NRRL B-3711).